Consider the following 263-residue polypeptide: Regulatory protein RecX (263 aa).

The protein belongs to the RecX family.

The protein localises to the cytoplasm. Its function is as follows. Modulates RecA activity. This Bacillus pumilus (strain SAFR-032) protein is Regulatory protein RecX.